A 300-amino-acid polypeptide reads, in one-letter code: NADH-ubiquinone oxidoreductase chain 2 (300 aa).

The next 9 helical transmembrane spans lie at 4-24, 29-49, 58-78, 87-107, 122-142, 165-185, 201-221, 231-251, and 267-287; these read FFCI…NVLV, FLLM…YVGI, SLGL…IVMM, FWVF…FLTF, FSAF…LFVL, FLSV…MAFL, VLLV…IFVL, FLLF…LWLV, and VLFF…FSKI.

The protein belongs to the complex I subunit 2 family.

It localises to the mitochondrion inner membrane. It carries out the reaction a ubiquinone + NADH + 5 H(+)(in) = a ubiquinol + NAD(+) + 4 H(+)(out). In terms of biological role, core subunit of the mitochondrial membrane respiratory chain NADH dehydrogenase (Complex I) that is believed to belong to the minimal assembly required for catalysis. Complex I functions in the transfer of electrons from NADH to the respiratory chain. The immediate electron acceptor for the enzyme is believed to be ubiquinone. This chain is NADH-ubiquinone oxidoreductase chain 2 (ND2), found in Ascaris suum (Pig roundworm).